A 471-amino-acid chain; its full sequence is Argininosuccinate lyase (471 aa).

It belongs to the lyase 1 family. Argininosuccinate lyase subfamily.

Its subcellular location is the cytoplasm. It catalyses the reaction 2-(N(omega)-L-arginino)succinate = fumarate + L-arginine. It participates in amino-acid biosynthesis; L-arginine biosynthesis; L-arginine from L-ornithine and carbamoyl phosphate: step 3/3. The sequence is that of Argininosuccinate lyase from Acidiphilium cryptum (strain JF-5).